A 327-amino-acid polypeptide reads, in one-letter code: Lipoyl synthase (327 aa).

Cys-75, Cys-80, Cys-86, Cys-101, Cys-105, Cys-108, and Ser-315 together coordinate [4Fe-4S] cluster. Positions 87-304 (FGNGTATFMI…EEEAYKMGFS (218 aa)) constitute a Radical SAM core domain.

It belongs to the radical SAM superfamily. Lipoyl synthase family. [4Fe-4S] cluster serves as cofactor.

The protein localises to the cytoplasm. It catalyses the reaction [[Fe-S] cluster scaffold protein carrying a second [4Fe-4S](2+) cluster] + N(6)-octanoyl-L-lysyl-[protein] + 2 oxidized [2Fe-2S]-[ferredoxin] + 2 S-adenosyl-L-methionine + 4 H(+) = [[Fe-S] cluster scaffold protein] + N(6)-[(R)-dihydrolipoyl]-L-lysyl-[protein] + 4 Fe(3+) + 2 hydrogen sulfide + 2 5'-deoxyadenosine + 2 L-methionine + 2 reduced [2Fe-2S]-[ferredoxin]. It participates in protein modification; protein lipoylation via endogenous pathway; protein N(6)-(lipoyl)lysine from octanoyl-[acyl-carrier-protein]: step 2/2. Catalyzes the radical-mediated insertion of two sulfur atoms into the C-6 and C-8 positions of the octanoyl moiety bound to the lipoyl domains of lipoate-dependent enzymes, thereby converting the octanoylated domains into lipoylated derivatives. The polypeptide is Lipoyl synthase (Variovorax paradoxus (strain S110)).